A 493-amino-acid chain; its full sequence is Cobyric acid synthase (493 aa).

The GATase cobBQ-type domain occupies 246-440 (PIDIAVIKMP…IHGVFDGVSF (195 aa)). C326 functions as the Nucleophile in the catalytic mechanism. H432 is an active-site residue.

It belongs to the CobB/CobQ family. CobQ subfamily.

It participates in cofactor biosynthesis; adenosylcobalamin biosynthesis. Catalyzes amidations at positions B, D, E, and G on adenosylcobyrinic A,C-diamide. NH(2) groups are provided by glutamine, and one molecule of ATP is hydrogenolyzed for each amidation. The sequence is that of Cobyric acid synthase from Clostridium botulinum (strain Langeland / NCTC 10281 / Type F).